A 668-amino-acid chain; its full sequence is GTP-binding protein 1 (668 aa).

A disordered region spans residues 1 to 32 (MAAERSRSPVDSPVPASMFAPEPSSPGAARAA). A phosphoserine mark is found at Ser-6, Ser-8, Ser-12, Ser-24, Ser-25, Ser-44, Ser-47, and Ser-69. A tr-type G domain is found at 158 to 389 (FLEVRVAVVG…LNLLSPRTSY (232 aa)). The interval 167–174 (GNVDAGKS) is G1. 167–174 (GNVDAGKS) contacts GTP. Positions 206 to 210 (GRTSS) are G2. Residues 252 to 255 (DLAG) form a G3 region. GTP-binding positions include 252-256 (DLAGH) and 308-311 (TKID). The G4 stretch occupies residues 308–311 (TKID). Residues 366–368 (SNV) form a G5 region. The span at 573–595 (LLQTTNNSPMNSKPQQIKMQSTK) shows a compositional bias: polar residues. A disordered region spans residues 573 to 668 (LLQTTNNSPM…GACVTPASGC (96 aa)). Residue Ser-580 is modified to Phosphoserine. Low complexity predominate over residues 609–619 (GVPAAGGPPTG). Residues 624–637 (SLGTAQAASTSGLQ) are compositionally biased toward polar residues. Over residues 646-657 (GRRRGGQRHKVK) the composition is skewed to basic residues.

It belongs to the TRAFAC class translation factor GTPase superfamily. Classic translation factor GTPase family. GTPBP1 subfamily. Interacts with EXOSC2/RRP4, EXOSC3/RRP40, EXOSC5/RRP46, HNRNPD, HNRNPR and SYNCRIP. Identified in a complex with AANAT mRNA, but does not bind mRNA by itself. In terms of tissue distribution, detected in some neurons in the brain cortex. Detected in small arteries, dendritic cells and macrophages in the thymus. Detected in lung bronchi, in bronchial epithelial cells and in bronchial smooth muscle cells. Detected in smooth muscle cells in a broad range of organs (at protein level). Expressed in brain, thymus, lung, and kidney.

The protein localises to the cytoplasm. Promotes degradation of target mRNA species. Plays a role in the regulation of circadian mRNA stability. Binds GTP and has GTPase activity. This Mus musculus (Mouse) protein is GTP-binding protein 1 (Gtpbp1).